The sequence spans 370 residues: 4-hydroxy-3-methylbut-2-en-1-yl diphosphate synthase (flavodoxin) (370 aa).

Residues C268, C271, C303, and E310 each contribute to the [4Fe-4S] cluster site.

This sequence belongs to the IspG family. [4Fe-4S] cluster is required as a cofactor.

It carries out the reaction (2E)-4-hydroxy-3-methylbut-2-enyl diphosphate + oxidized [flavodoxin] + H2O + 2 H(+) = 2-C-methyl-D-erythritol 2,4-cyclic diphosphate + reduced [flavodoxin]. It participates in isoprenoid biosynthesis; isopentenyl diphosphate biosynthesis via DXP pathway; isopentenyl diphosphate from 1-deoxy-D-xylulose 5-phosphate: step 5/6. Functionally, converts 2C-methyl-D-erythritol 2,4-cyclodiphosphate (ME-2,4cPP) into 1-hydroxy-2-methyl-2-(E)-butenyl 4-diphosphate. The sequence is that of 4-hydroxy-3-methylbut-2-en-1-yl diphosphate synthase (flavodoxin) from Bacillus cereus (strain AH187).